A 101-amino-acid chain; its full sequence is Urease subunit beta (101 aa).

It belongs to the urease beta subunit family. In terms of assembly, heterotrimer of UreA (gamma), UreB (beta) and UreC (alpha) subunits. Three heterotrimers associate to form the active enzyme.

Its subcellular location is the cytoplasm. It carries out the reaction urea + 2 H2O + H(+) = hydrogencarbonate + 2 NH4(+). Its pathway is nitrogen metabolism; urea degradation; CO(2) and NH(3) from urea (urease route): step 1/1. The polypeptide is Urease subunit beta (Ruegeria pomeroyi (strain ATCC 700808 / DSM 15171 / DSS-3) (Silicibacter pomeroyi)).